The primary structure comprises 444 residues: Glutamate-1-semialdehyde 2,1-aminomutase (444 aa).

Position 267 is an N6-(pyridoxal phosphate)lysine (Lys267).

The protein belongs to the class-III pyridoxal-phosphate-dependent aminotransferase family. HemL subfamily. In terms of assembly, homodimer. The cofactor is pyridoxal 5'-phosphate.

The protein resides in the cytoplasm. It catalyses the reaction (S)-4-amino-5-oxopentanoate = 5-aminolevulinate. It functions in the pathway porphyrin-containing compound metabolism; protoporphyrin-IX biosynthesis; 5-aminolevulinate from L-glutamyl-tRNA(Glu): step 2/2. The polypeptide is Glutamate-1-semialdehyde 2,1-aminomutase (Xylella fastidiosa (strain M12)).